The primary structure comprises 424 residues: Histidine--tRNA ligase (424 aa).

It belongs to the class-II aminoacyl-tRNA synthetase family. In terms of assembly, homodimer.

The protein resides in the cytoplasm. It carries out the reaction tRNA(His) + L-histidine + ATP = L-histidyl-tRNA(His) + AMP + diphosphate + H(+). This chain is Histidine--tRNA ligase, found in Salmonella agona (strain SL483).